We begin with the raw amino-acid sequence, 336 residues long: 4-aminobenzoate N-oxygenase (336 aa).

Tyr93 provides a ligand contact to 4-nitrobenzoate. Residues Glu101, Glu136, His139, and Glu196 each contribute to the Fe cation site. Asn200 is a binding site for 4-nitrobenzoate. Residues His223, Glu227, and His230 each contribute to the Fe cation site.

The protein belongs to the AurF N-oxygenase family. In terms of assembly, homodimer. It depends on Fe(2+) as a cofactor.

It carries out the reaction 4-aminobenzoate + AH2 + 2 O2 = 4-nitrobenzoate + A + 2 H2O. It participates in antibiotic biosynthesis. Its function is as follows. Involved in the biosynthesis of the polyketide antibiotic aureothin. Catalyzes the oxidation of p-aminobenzoate (pABA) to p-nitrobenzoate (pNBA), an unusual polyketide synthase starter unit. Reaction mechanism involves the generation of a peroxodiiron(III/III) intermediate, which effects the initial oxidation of p-aminobenzoate to p-hydroxylaminobenzoate (Ar-NHOH). Ar-NHOH is then probably directly converted to the fully oxidized p-nitrobenzoate via a four-electron N-oxidation, bypassing the formation of a nitroso compound. This Streptomyces thioluteus protein is 4-aminobenzoate N-oxygenase.